A 155-amino-acid chain; its full sequence is Ribosomal RNA large subunit methyltransferase H (155 aa).

Residues leucine 72, glycine 103, and 122–127 (LSPLTL) each bind S-adenosyl-L-methionine.

The protein belongs to the RNA methyltransferase RlmH family. In terms of assembly, homodimer.

The protein localises to the cytoplasm. It catalyses the reaction pseudouridine(1915) in 23S rRNA + S-adenosyl-L-methionine = N(3)-methylpseudouridine(1915) in 23S rRNA + S-adenosyl-L-homocysteine + H(+). Its function is as follows. Specifically methylates the pseudouridine at position 1915 (m3Psi1915) in 23S rRNA. This Aeromonas hydrophila subsp. hydrophila (strain ATCC 7966 / DSM 30187 / BCRC 13018 / CCUG 14551 / JCM 1027 / KCTC 2358 / NCIMB 9240 / NCTC 8049) protein is Ribosomal RNA large subunit methyltransferase H.